Consider the following 468-residue polypeptide: Neurexin-1-beta (468 aa).

Residues 1–46 (MYQRMLRCGAELGSPGGGSSGGAGGRLALLWIVPLTLSGLLGVAWG) form the signal peptide. The Extracellular segment spans residues 47–391 (ASSLGAHHIH…AEVIRESSST (345 aa)). The Laminin G-like domain occupies 87 to 285 (YIFSKGGGQI…DANIAIVGNV (199 aa)). Positions 137 and 154 each coordinate Ca(2+). N184 carries N-linked (GlcNAc...) asparagine glycosylation. The segment at 201–230 (GNNDNERLAIARQRIPYRLGRVVDEWLLDK) is essential for interaction with CBLN1; modulates interaction affinity with NLGN1, NLGN2 and NLGN3; prevents interaction with DAG1/alpha-dystroglycan; modulates interaction with alpha-latrotoxin. Ca(2+) contacts are provided by I236 and N238. An O-linked (Xyl...) (heparan sulfate) serine glycan is attached at S346. Residues 350–381 (PSDDEDIDPCEPSSGGLANPTRVGGREPYPGS) form a disordered region. Residues 392–414 (TGMVVGIVAAAALCILILLYAMY) form a helical membrane-spanning segment. Over 415-468 (KYRNRDEGSYHVDESRNYISNSAQSNGAVVKEKQPSSAKSANKNKKNKDKEYYV) the chain is Cytoplasmic. Residues 435–468 (NSAQSNGAVVKEKQPSSAKSANKNKKNKDKEYYV) form a disordered region. S450, S451, and S454 each carry phosphoserine.

This sequence belongs to the neurexin family. In terms of assembly, the cytoplasmic C-terminal region binds to CASK. Binds NLGN1, NLGN2 and NLGN3, DAG1 (alpha-dystroglycan) and alpha-latrotoxin. Binding to neuroligins is calcium-dependent, and the binding preference ranks as follow: NLGN1 &gt; NLGN4 &gt;&gt; NLGN3 &gt; NLGN2. Interacts with CBLN2 and more weakly with CBLN4. Interacts with CBLN1; interaction is CBLN1 hexamer form-dependent; CBLN1-binding is calcium-independent; isoform 1b does not interact with CBLN1. Interacts with CLSTN3. In terms of processing, N-glycosylated. O-glycosylated; contains heparan sulfate. Heparan sulfate attachment is required for synapse development by mediating interactions with neuroligins. Brain.

Its subcellular location is the presynaptic cell membrane. In terms of biological role, neuronal cell surface protein involved in cell recognition and cell adhesion by forming intracellular junctions through binding to neuroligins. Plays a role in formation of synaptic junctions. Functions as part of a trans-synaptic complex by binding to cerebellins and postsynaptic GRID1. This interaction helps regulate the activity of NMDA and AMPA receptors at hippocampal synapses without affecting synapse formation. NRXN1B-CBLN2-GRID1 complex transduce presynaptic signals into postsynaptic NMDAR response. The chain is Neurexin-1-beta from Rattus norvegicus (Rat).